Here is a 254-residue protein sequence, read N- to C-terminus: Thiamine thiazole synthase (254 aa).

NAD(+) contacts are provided by residues Ser36, 55-56 (EK), Gly63, Val127, and 154-156 (HVD). Residues Asp156 and His171 each contribute to the Fe cation site. Met219 is a binding site for NAD(+). Position 229 (Arg229) interacts with glycine.

It belongs to the THI4 family. As to quaternary structure, homooctamer; tetramer of dimers. Fe(2+) is required as a cofactor.

The catalysed reaction is hydrogen sulfide + glycine + NAD(+) = ADP-5-ethyl-4-methylthiazole-2-carboxylate + nicotinamide + 3 H2O + H(+). It functions in the pathway cofactor biosynthesis; thiamine diphosphate biosynthesis. Its function is as follows. Involved in the biosynthesis of the thiazole moiety of thiamine. Catalyzes the conversion of NAD and glycine to adenosine diphosphate 5-(2-hydroxyethyl)-4-methylthiazole-2-carboxylate (ADT), an adenylated thiazole intermediate, using free sulfide as a source of sulfur. The chain is Thiamine thiazole synthase from Methanoculleus marisnigri (strain ATCC 35101 / DSM 1498 / JR1).